The following is a 195-amino-acid chain: uncharacterized protein (195 aa).

The Nudix hydrolase domain occupies Ser34 to Asn165. Positions Gly72–Ala94 match the Nudix box motif. 2 residues coordinate Mg(2+): Glu88 and Glu92.

Belongs to the Nudix hydrolase family. PCD1 subfamily. Mn(2+) serves as cofactor. It depends on Mg(2+) as a cofactor.

Functionally, probably mediates the hydrolysis of some nucleoside diphosphate derivatives. This is an uncharacterized protein from Yersinia enterocolitica serotype O:8 / biotype 1B (strain NCTC 13174 / 8081).